Here is a 137-residue protein sequence, read N- to C-terminus: uncharacterized protein (137 aa).

It belongs to the ycf72 family.

It is found in the plastid. The protein resides in the chloroplast. This is an uncharacterized protein from Saccharum hybrid (Sugarcane).